A 364-amino-acid chain; its full sequence is Large ribosomal subunit protein bL27m (364 aa).

The transit peptide at 1–19 (MFSSSWQQVPKFVVQQVRT) directs the protein to the mitochondrion.

This sequence belongs to the bacterial ribosomal protein bL27 family.

It localises to the mitochondrion. Component of the large subunit of mitochondrial ribosome. This is Large ribosomal subunit protein bL27m (MRPL2) from Kluyveromyces lactis (strain ATCC 8585 / CBS 2359 / DSM 70799 / NBRC 1267 / NRRL Y-1140 / WM37) (Yeast).